Here is a 358-residue protein sequence, read N- to C-terminus: Uroporphyrinogen decarboxylase (358 aa).

Substrate contacts are provided by residues 28–32 (RQAGR), Asp-78, Tyr-154, Ser-208, and His-324.

The protein belongs to the uroporphyrinogen decarboxylase family. Homodimer.

It is found in the cytoplasm. The catalysed reaction is uroporphyrinogen III + 4 H(+) = coproporphyrinogen III + 4 CO2. It functions in the pathway porphyrin-containing compound metabolism; protoporphyrin-IX biosynthesis; coproporphyrinogen-III from 5-aminolevulinate: step 4/4. Catalyzes the decarboxylation of four acetate groups of uroporphyrinogen-III to yield coproporphyrinogen-III. This chain is Uroporphyrinogen decarboxylase, found in Acidiphilium cryptum (strain JF-5).